The chain runs to 211 residues: Pyridoxine/pyridoxamine 5'-phosphate oxidase (211 aa).

Substrate-binding positions include 7–10 (RREY) and K65. Residues 60–65 (RIVLLK), 75–76 (YT), R81, K82, and Q104 each bind FMN. Residues Y122, R126, and S130 each coordinate substrate. Residues 139–140 (QS) and W184 contribute to the FMN site. Residue 190 to 192 (RLH) coordinates substrate. Residue R194 coordinates FMN.

The protein belongs to the pyridoxamine 5'-phosphate oxidase family. Homodimer. The cofactor is FMN.

It catalyses the reaction pyridoxamine 5'-phosphate + O2 + H2O = pyridoxal 5'-phosphate + H2O2 + NH4(+). The enzyme catalyses pyridoxine 5'-phosphate + O2 = pyridoxal 5'-phosphate + H2O2. The protein operates within cofactor metabolism; pyridoxal 5'-phosphate salvage; pyridoxal 5'-phosphate from pyridoxamine 5'-phosphate: step 1/1. Its pathway is cofactor metabolism; pyridoxal 5'-phosphate salvage; pyridoxal 5'-phosphate from pyridoxine 5'-phosphate: step 1/1. Functionally, catalyzes the oxidation of either pyridoxine 5'-phosphate (PNP) or pyridoxamine 5'-phosphate (PMP) into pyridoxal 5'-phosphate (PLP). The sequence is that of Pyridoxine/pyridoxamine 5'-phosphate oxidase from Vibrio vulnificus (strain CMCP6).